We begin with the raw amino-acid sequence, 288 residues long: Putative sugar uptake protein gbs2116 (288 aa).

The next 10 helical transmembrane spans lie at L4 to G26, F33 to K50, T55 to G72, V85 to V107, F117 to S134, F154 to F171, A181 to F200, V207 to A229, L234 to L256, and V268 to V285.

This sequence belongs to the GRP transporter (TC 2.A.7.5) family.

The protein localises to the cell membrane. This is Putative sugar uptake protein gbs2116 from Streptococcus agalactiae serotype III (strain NEM316).